The primary structure comprises 233 residues: 2-C-methyl-D-erythritol 4-phosphate cytidylyltransferase (233 aa).

It belongs to the IspD/TarI cytidylyltransferase family. IspD subfamily.

It carries out the reaction 2-C-methyl-D-erythritol 4-phosphate + CTP + H(+) = 4-CDP-2-C-methyl-D-erythritol + diphosphate. It participates in isoprenoid biosynthesis; isopentenyl diphosphate biosynthesis via DXP pathway; isopentenyl diphosphate from 1-deoxy-D-xylulose 5-phosphate: step 2/6. In terms of biological role, catalyzes the formation of 4-diphosphocytidyl-2-C-methyl-D-erythritol from CTP and 2-C-methyl-D-erythritol 4-phosphate (MEP). This is 2-C-methyl-D-erythritol 4-phosphate cytidylyltransferase from Carboxydothermus hydrogenoformans (strain ATCC BAA-161 / DSM 6008 / Z-2901).